The chain runs to 336 residues: MIVLGIESSCDETGLAIYDYSKKKLIADELYSQVKLHKKYGGVVPELASREHIAKLNLLAKKIFKETGLSFEDIDCIAYTAMPGLVGALMVGATFAKTLGLIHNIDTIAVHHLEGHLLSPLLDHNSNIEYPFVALLVSGGHTQLFEVKEFGEYSLLGESIDDAAGEAFDKTTKLLGMGYPGGVEVANLADQATDKSKYILPRPMKNKPNLDFSFSGLKTAVLNTWYDEQDQSLENKANLCYAFQDAAIDVLVSKCAKALQKTKNTRLVISGGVSANKLLRHQLDLLAKNRGYQIFFPPMKYCTDNGAMIALAGAYRYVNGFKDSNLEINVKARSPL.

The Fe cation site is built by H112 and H116. Substrate contacts are provided by residues 136 to 140 (LVSGG), D169, G182, and N276. D304 serves as a coordination point for Fe cation.

Belongs to the KAE1 / TsaD family. The cofactor is Fe(2+).

It is found in the cytoplasm. The catalysed reaction is L-threonylcarbamoyladenylate + adenosine(37) in tRNA = N(6)-L-threonylcarbamoyladenosine(37) in tRNA + AMP + H(+). Functionally, required for the formation of a threonylcarbamoyl group on adenosine at position 37 (t(6)A37) in tRNAs that read codons beginning with adenine. Is involved in the transfer of the threonylcarbamoyl moiety of threonylcarbamoyl-AMP (TC-AMP) to the N6 group of A37, together with TsaE and TsaB. TsaD likely plays a direct catalytic role in this reaction. The polypeptide is tRNA N6-adenosine threonylcarbamoyltransferase (Francisella tularensis subsp. tularensis (strain FSC 198)).